A 363-amino-acid chain; its full sequence is Putative glutamate--cysteine ligase 2 (363 aa).

Belongs to the glutamate--cysteine ligase type 2 family. YbdK subfamily.

The catalysed reaction is L-cysteine + L-glutamate + ATP = gamma-L-glutamyl-L-cysteine + ADP + phosphate + H(+). Functionally, ATP-dependent carboxylate-amine ligase which exhibits weak glutamate--cysteine ligase activity. This chain is Putative glutamate--cysteine ligase 2, found in Streptomyces coelicolor (strain ATCC BAA-471 / A3(2) / M145).